We begin with the raw amino-acid sequence, 277 residues long: Urease accessory protein UreD (277 aa).

The protein belongs to the UreD family. As to quaternary structure, ureD, UreF and UreG form a complex that acts as a GTP-hydrolysis-dependent molecular chaperone, activating the urease apoprotein by helping to assemble the nickel containing metallocenter of UreC. The UreE protein probably delivers the nickel.

The protein resides in the cytoplasm. Required for maturation of urease via the functional incorporation of the urease nickel metallocenter. The polypeptide is Urease accessory protein UreD (Yersinia pestis (strain Pestoides F)).